Here is a 101-residue protein sequence, read N- to C-terminus: Apolipoprotein C-II (101 aa).

Positions 1 to 26 are cleaved as a signal peptide; sequence MGTRYFLALFLILLVLGFKVQGVAMA. Residues 66–74 form a lipid binding region; the sequence is TMDEKIRDI. The tract at residues 78 to 101 is lipoprotein lipase cofactor; sequence STAAVTTYAGIFTDQLLSLLKGDQ.

The protein belongs to the apolipoprotein C2 family. In terms of processing, proapolipoprotein C-II is synthesized as a sialic acid containing glycoprotein which is subsequently desialylated prior to its proteolytic processing. Proapolipoprotein C-II undergoes proteolytic cleavage of its N-terminal hexapeptide to generate apolipoprotein C-II. In bovine, proapolipoprotein C-II was found to be the minor form whereas apolipoprotein C-II was found to be the major form in plasma.

It is found in the secreted. In terms of biological role, component of chylomicrons, very low-density lipoproteins (VLDL), low-density lipoproteins (LDL), and high-density lipoproteins (HDL) in plasma. Plays an important role in lipoprotein metabolism as an activator of lipoprotein lipase. Both proapolipoprotein C-II and apolipoprotein C-II can activate lipoprotein lipase. In Camelus dromedarius (Dromedary), this protein is Apolipoprotein C-II (APOC2).